The chain runs to 252 residues: 5'-nucleotidase SurE (252 aa).

A divalent metal cation-binding residues include D8, D9, S39, and N95.

The protein belongs to the SurE nucleotidase family. A divalent metal cation serves as cofactor.

Its subcellular location is the cytoplasm. The catalysed reaction is a ribonucleoside 5'-phosphate + H2O = a ribonucleoside + phosphate. Functionally, nucleotidase that shows phosphatase activity on nucleoside 5'-monophosphates. The protein is 5'-nucleotidase SurE of Clostridium botulinum (strain ATCC 19397 / Type A).